A 369-amino-acid polypeptide reads, in one-letter code: Phosphoserine aminotransferase (369 aa).

R42 lines the L-glutamate pocket. Pyridoxal 5'-phosphate is bound by residues W101, T152, D176, and Q199. An N6-(pyridoxal phosphate)lysine modification is found at K200. 241 to 242 is a pyridoxal 5'-phosphate binding site; it reads NT.

It belongs to the class-V pyridoxal-phosphate-dependent aminotransferase family. SerC subfamily. As to quaternary structure, homodimer. Pyridoxal 5'-phosphate serves as cofactor.

The protein resides in the cytoplasm. The enzyme catalyses O-phospho-L-serine + 2-oxoglutarate = 3-phosphooxypyruvate + L-glutamate. It carries out the reaction 4-(phosphooxy)-L-threonine + 2-oxoglutarate = (R)-3-hydroxy-2-oxo-4-phosphooxybutanoate + L-glutamate. It functions in the pathway amino-acid biosynthesis; L-serine biosynthesis; L-serine from 3-phospho-D-glycerate: step 2/3. It participates in cofactor biosynthesis; pyridoxine 5'-phosphate biosynthesis; pyridoxine 5'-phosphate from D-erythrose 4-phosphate: step 3/5. In terms of biological role, catalyzes the reversible conversion of 3-phosphohydroxypyruvate to phosphoserine and of 3-hydroxy-2-oxo-4-phosphonooxybutanoate to phosphohydroxythreonine. This is Phosphoserine aminotransferase from Delftia acidovorans (strain DSM 14801 / SPH-1).